A 166-amino-acid chain; its full sequence is Monodehydroascorbate reductase, fruit isozyme (166 aa).

This sequence belongs to the FAD-dependent oxidoreductase family. It depends on FAD as a cofactor. The N-terminus is blocked.

It catalyses the reaction 2 monodehydro-L-ascorbate radical + NADH + H(+) = 2 L-ascorbate + NAD(+). Catalyzes the conversion of monodehydroascorbate to ascorbate, oxidizing NADH in the process. The polypeptide is Monodehydroascorbate reductase, fruit isozyme (Cucumis sativus (Cucumber)).